A 211-amino-acid chain; its full sequence is Ubiquitin-conjugating enzyme E2 S-C (211 aa).

Residues 11-157 (HIIRRVYKEV…AKLMTEIHAQ (147 aa)) enclose the UBC core domain. Cysteine 95 (glycyl thioester intermediate) is an active-site residue. Residues 158–211 (GSTLRGKDPTDPCSSASATVVSGDGPMAKKHAGDRDKKLAAKKKTDKKRALRRL) form a disordered region. Residues 197–211 (AAKKKTDKKRALRRL) are compositionally biased toward basic residues.

The protein belongs to the ubiquitin-conjugating enzyme family.

It catalyses the reaction S-ubiquitinyl-[E1 ubiquitin-activating enzyme]-L-cysteine + [E2 ubiquitin-conjugating enzyme]-L-cysteine = [E1 ubiquitin-activating enzyme]-L-cysteine + S-ubiquitinyl-[E2 ubiquitin-conjugating enzyme]-L-cysteine.. It functions in the pathway protein modification; protein ubiquitination. Its function is as follows. Catalyzes the covalent attachment of ubiquitin to other proteins. Acts as an essential factor of the anaphase promoting complex/cyclosome (APC/C), a cell cycle-regulated ubiquitin ligase that controls progression through mitosis. Acts by specifically elongating 'Lys-11'-linked polyubiquitin chains initiated by the E2 enzyme ube2c/ubch10 on APC/C substrates, enhancing the degradation of APC/C substrates by the proteasome and promoting mitotic exit. The sequence is that of Ubiquitin-conjugating enzyme E2 S-C (ube2s-c) from Xenopus laevis (African clawed frog).